A 204-amino-acid polypeptide reads, in one-letter code: Probable GTP-binding protein EngB (204 aa).

The EngB-type G domain maps to T23 to M195. Residues G31–S38, G58–E62, D76–G79, T143–D146, and F174–A176 contribute to the GTP site. Positions 38 and 60 each coordinate Mg(2+).

It belongs to the TRAFAC class TrmE-Era-EngA-EngB-Septin-like GTPase superfamily. EngB GTPase family. Requires Mg(2+) as cofactor.

Its function is as follows. Necessary for normal cell division and for the maintenance of normal septation. The protein is Probable GTP-binding protein EngB of Gemmatimonas aurantiaca (strain DSM 14586 / JCM 11422 / NBRC 100505 / T-27).